A 507-amino-acid chain; its full sequence is UDP-N-acetylglucosamine 1-carboxyvinyltransferase 1 (507 aa).

Position 41–42 (41–42 (KN)) interacts with phosphoenolpyruvate. Arg-112 contributes to the UDP-N-acetyl-alpha-D-glucosamine binding site. Residue Cys-136 is the Proton donor of the active site. Cys-136 carries the post-translational modification 2-(S-cysteinyl)pyruvic acid O-phosphothioketal. Residues 141–145 (RPIDL), Asp-328, and Leu-350 contribute to the UDP-N-acetyl-alpha-D-glucosamine site.

It belongs to the EPSP synthase family. MurA subfamily.

The protein resides in the cytoplasm. The enzyme catalyses phosphoenolpyruvate + UDP-N-acetyl-alpha-D-glucosamine = UDP-N-acetyl-3-O-(1-carboxyvinyl)-alpha-D-glucosamine + phosphate. It participates in cell wall biogenesis; peptidoglycan biosynthesis. In terms of biological role, cell wall formation. Adds enolpyruvyl to UDP-N-acetylglucosamine. The protein is UDP-N-acetylglucosamine 1-carboxyvinyltransferase 1 of Legionella pneumophila (strain Lens).